Here is a 318-residue protein sequence, read N- to C-terminus: Nisin-resistance protein (318 aa).

The chain crosses the membrane as a helical span at residues 7–28; sequence ILLGLVAVCALFLGIIYLWGYK.

The protein resides in the cell membrane. The polypeptide is Nisin-resistance protein (nsr) (Lactococcus lactis subsp. lactis (Streptococcus lactis)).